A 94-amino-acid polypeptide reads, in one-letter code: MTLRDLVDKLLGRQPASASTARDRLQLVLAHDRSDLSPELLDQMRREIFEVVAKYVDIDLEEGDVSLETEDRVTALVANLPFRRPITSAPPKSD.

This sequence belongs to the MinE family.

Prevents the cell division inhibition by proteins MinC and MinD at internal division sites while permitting inhibition at polar sites. This ensures cell division at the proper site by restricting the formation of a division septum at the midpoint of the long axis of the cell. This is Cell division topological specificity factor from Synechococcus sp. (strain CC9311).